Consider the following 1526-residue polypeptide: DNA topoisomerase 2-alpha (1526 aa).

At Met-1 the chain carries N-acetylmethionine. Positions 1–21 (MELSPLQPVNENMQMNKKKNE) are disordered. Position 4 is a phosphoserine (Ser-4). Residue Lys-17 forms a Glycyl lysine isopeptide (Lys-Gly) (interchain with G-Cter in SUMO2) linkage. ATP contacts are provided by residues Asn-90, Asn-119, and 147–149 (SSN). Residues Lys-155 and Lys-156 each participate in a glycyl lysine isopeptide (Lys-Gly) (interchain with G-Cter in SUMO2) cross-link. ATP is bound at residue 160-167 (GRNGYGAK). Lys-260 participates in a covalent cross-link: Glycyl lysine isopeptide (Lys-Gly) (interchain with G-Cter in SUMO2). At Thr-281 the chain carries Phosphothreonine. The tract at residues 341–343 (KKK) is interaction with DNA. Lys-351 is covalently cross-linked (Glycyl lysine isopeptide (Lys-Gly) (interchain with G-Cter in SUMO2)). Residue 375–377 (QTK) coordinates ATP. Residues Lys-385, Lys-396, Lys-415, Lys-417, Lys-424, and Lys-439 each participate in a glycyl lysine isopeptide (Lys-Gly) (interchain with G-Cter in SUMO2) cross-link. In terms of domain architecture, Toprim spans 454 to 571 (CTLILTEGDS…SLLRHRFLEE (118 aa)). A Mg(2+)-binding site is contributed by Glu-460. Glycyl lysine isopeptide (Lys-Gly) (interchain with G-Cter in SUMO2) cross-links involve residues Lys-465, Lys-479, and Lys-528. Residues Asp-540 and Asp-542 each coordinate Mg(2+). Residues Lys-583, Lys-598, Lys-613, Lys-621, Lys-624, Lys-631, Lys-638, Lys-654, Lys-661, and Lys-675 each participate in a glycyl lysine isopeptide (Lys-Gly) (interchain with G-Cter in SUMO2) cross-link. In terms of domain architecture, Topo IIA-type catalytic spans 714-1166 (IPSMVDGLKP…SPSDLWKEDL (453 aa)). Catalysis depends on Tyr-804, which acts as the O-(5'-phospho-DNA)-tyrosine intermediate. The interaction with DNA stretch occupies residues 989-998 (KLQTSLTCNS). A Glycyl lysine isopeptide (Lys-Gly) (interchain with G-Cter in SUMO2) cross-link involves residue Lys-1074. 2 disordered regions span residues 1089–1117 (WKEA…AESG) and 1180–1217 (EKQD…VIPQ). Residues 1098-1109 (DEEENEESDNEN) show a composition bias toward acidic residues. A Phosphoserine; by CK1 modification is found at Ser-1105. Glycyl lysine isopeptide (Lys-Gly) (interchain with G-Cter in SUMO2) cross-links involve residues Lys-1191 and Lys-1199. Ser-1208 is subject to Phosphoserine. Lys-1223 participates in a covalent cross-link: Glycyl lysine isopeptide (Lys-Gly) (interchain with G-Cter in SUMO2). A disordered region spans residues 1233 to 1526 (KIKSENVEGT…LEESDDDDLF (294 aa)). Residue Lys-1235 forms a Glycyl lysine isopeptide (Lys-Gly) (interchain with G-Cter in SUMO1); alternate linkage. Lys-1235 participates in a covalent cross-link: Glycyl lysine isopeptide (Lys-Gly) (interchain with G-Cter in SUMO2); alternate. The residue at position 1242 (Thr-1242) is a Phosphothreonine. A Glycyl lysine isopeptide (Lys-Gly) (interchain with G-Cter in SUMO2) cross-link involves residue Lys-1254. Positions 1255-1265 (QRIEKKQKKEP) are enriched in basic and acidic residues. Glycyl lysine isopeptide (Lys-Gly) (interchain with G-Cter in SUMO2) cross-links involve residues Lys-1271, Lys-1278, and Lys-1281. Phosphoserine is present on residues Ser-1290, Ser-1292, Ser-1294, and Ser-1297. Thr-1322 is subject to Phosphothreonine. Acidic residues predominate over residues 1325-1344 (LDSDEDFSGSDGKDEDEDFF). Residues Ser-1327 and Ser-1332 each carry the phosphoserine modification. Thr-1349 is subject to Phosphothreonine. Glycyl lysine isopeptide (Lys-Gly) (interchain with G-Cter in SUMO2) cross-links involve residues Lys-1358, Lys-1362, and Lys-1368. A phosphoserine mark is found at Ser-1369 and Ser-1372. Residue Lys-1380 forms a Glycyl lysine isopeptide (Lys-Gly) (interchain with G-Cter in SUMO2) linkage. 2 positions are modified to phosphoserine: Ser-1382 and Ser-1386. The segment covering 1405–1426 (SKQTVAVKKTATKSQSSTSTAG) has biased composition (low complexity). Residue Lys-1417 forms a Glycyl lysine isopeptide (Lys-Gly) (interchain with G-Cter in SUMO2); alternate linkage. At Lys-1417 the chain carries N6-acetyllysine; alternate. The segment at 1428–1434 (KKRAVPK) is interaction with PLSCR1. Lys-1437 is covalently cross-linked (Glycyl lysine isopeptide (Lys-Gly) (interchain with G-Cter in SUMO2); alternate). The residue at position 1437 (Lys-1437) is an N6-acetyllysine; alternate. Residues Lys-1449 and Lys-1454 each participate in a glycyl lysine isopeptide (Lys-Gly) (interchain with G-Cter in SUMO2) cross-link. 4 positions are modified to phosphoserine: Ser-1464, Ser-1466, Ser-1469, and Ser-1471. Residues Lys-1479 and Lys-1487 each participate in a glycyl lysine isopeptide (Lys-Gly) (interchain with G-Cter in SUMO2) cross-link. Positions 1486–1497 (SKGENQDFRVDL) are enriched in basic and acidic residues. At Ser-1520 the chain carries Phosphoserine.

This sequence belongs to the type II topoisomerase family. In terms of assembly, homodimer. Interacts with COPS5. Interacts with RECQL5; this stimulates DNA decatenation. Interacts with SETMAR; stimulates the topoisomerase activity. Interacts with DHX9; this interaction occurs in a E2 enzyme UBE2I- and RNA-dependent manner, negatively regulates DHX9-mediated double-stranded DNA and RNA duplex helicase activity and stimulates TOP2A-mediated supercoiled DNA relaxation activity. Interacts with HNRNPU (via C-terminus); this interaction protects the topoisomerase TOP2A from degradation and positively regulates the relaxation of supercoiled DNA in a RNA-dependent manner. Interacts with MCM3AP. Interacts with ERCC6. Interacts with PLSCR1. Interacts with GCNA; this interaction allows the resolution of topoisomerase II (TOP2A) DNA-protein cross-links. Interacts with POL1RA/RPA1 (via dock II) and UBTF in the context of Pol I complex; may assist Pol I transcription initiation by releasing supercoils occurring during DNA unwinding. Interacts with TPRN; TPRN interacts with a number of DNA damage response proteins, is recruited to sites of DNA damage and may play a role in DNA damage repair. It depends on Mg(2+) as a cofactor. Mn(2+) is required as a cofactor. Requires Ca(2+) as cofactor. In terms of processing, phosphorylation has no effect on catalytic activity. However, phosphorylation at Ser-1105 by CSNK1D/CK1 promotes DNA cleavable complex formation.

It localises to the cytoplasm. Its subcellular location is the nucleus. It is found in the nucleoplasm. The protein localises to the nucleolus. It carries out the reaction ATP-dependent breakage, passage and rejoining of double-stranded DNA.. Key decatenating enzyme that alters DNA topology by binding to two double-stranded DNA molecules, generating a double-stranded break in one of the strands, passing the intact strand through the broken strand, and religating the broken strand. May play a role in regulating the period length of BMAL1 transcriptional oscillation. The polypeptide is DNA topoisomerase 2-alpha (TOP2A) (Cricetulus griseus (Chinese hamster)).